We begin with the raw amino-acid sequence, 25 residues long: Large ribosomal subunit protein uL29 (25 aa).

The protein belongs to the universal ribosomal protein uL29 family.

The sequence is that of Large ribosomal subunit protein uL29 (rpmC) from Brevundimonas vesicularis (Pseudomonas vesicularis).